Reading from the N-terminus, the 231-residue chain is Large ribosomal subunit protein uL1 (231 aa).

This sequence belongs to the universal ribosomal protein uL1 family. In terms of assembly, part of the 50S ribosomal subunit.

In terms of biological role, binds directly to 23S rRNA. The L1 stalk is quite mobile in the ribosome, and is involved in E site tRNA release. Its function is as follows. Protein L1 is also a translational repressor protein, it controls the translation of the L11 operon by binding to its mRNA. This Azotobacter vinelandii (strain DJ / ATCC BAA-1303) protein is Large ribosomal subunit protein uL1.